The following is a 114-amino-acid chain: MNAASLVQRVAGISGALAVAAGAYGAHGFRRSEASDYQRELFDTANKYHFYHSLALLGAARCRKPALAGVILLTGMGCFCGPLYHQPLTNDPSFSKLAPIGGSLLIVGWAAMAL.

Residues 1–25 form the signal peptide; it reads MNAASLVQRVAGISGALAVAAGAYG. Over 26 to 64 the chain is Extracellular; the sequence is AHGFRRSEASDYQRELFDTANKYHFYHSLALLGAARCRK. The chain crosses the membrane as a helical span at residues 65–85; sequence PALAGVILLTGMGCFCGPLYH. At 86-93 the chain is on the cytoplasmic side; it reads QPLTNDPS. A helical membrane pass occupies residues 94–114; the sequence is FSKLAPIGGSLLIVGWAAMAL.

Belongs to the TMEM256 family.

It is found in the membrane. The protein is Transmembrane protein 256 (tmem256) of Danio rerio (Zebrafish).